We begin with the raw amino-acid sequence, 186 residues long: Elongation factor P (186 aa).

It belongs to the elongation factor P family.

It localises to the cytoplasm. It participates in protein biosynthesis; polypeptide chain elongation. In terms of biological role, involved in peptide bond synthesis. Stimulates efficient translation and peptide-bond synthesis on native or reconstituted 70S ribosomes in vitro. Probably functions indirectly by altering the affinity of the ribosome for aminoacyl-tRNA, thus increasing their reactivity as acceptors for peptidyl transferase. In Prochlorococcus marinus subsp. pastoris (strain CCMP1986 / NIES-2087 / MED4), this protein is Elongation factor P.